A 292-amino-acid polypeptide reads, in one-letter code: Ribosomal protein L11 methyltransferase (292 aa).

Threonine 144, glycine 165, aspartate 187, and asparagine 229 together coordinate S-adenosyl-L-methionine.

This sequence belongs to the methyltransferase superfamily. PrmA family.

It is found in the cytoplasm. It carries out the reaction L-lysyl-[protein] + 3 S-adenosyl-L-methionine = N(6),N(6),N(6)-trimethyl-L-lysyl-[protein] + 3 S-adenosyl-L-homocysteine + 3 H(+). Its function is as follows. Methylates ribosomal protein L11. The polypeptide is Ribosomal protein L11 methyltransferase (Pseudomonas putida (strain ATCC 47054 / DSM 6125 / CFBP 8728 / NCIMB 11950 / KT2440)).